The sequence spans 141 residues: Large ribosomal subunit protein uL16c (141 aa).

It belongs to the universal ribosomal protein uL16 family. As to quaternary structure, part of the 50S ribosomal subunit.

It is found in the plastid. The protein resides in the chloroplast. This chain is Large ribosomal subunit protein uL16c, found in Zygnema circumcarinatum (Green alga).